A 26-amino-acid polypeptide reads, in one-letter code: Aralin B chain (26 aa).

Disulfide-linked dimer of A and B chains. In terms of processing, glycosylated. High-mannose type oligosaccharides.

Functionally, lectin specific for galactose (Gal) and its derivatives. Induces apoptosis. Has cytotoxic activity against several human cancer cell lines. Is less cytotoxic to normal human cells. This is Aralin B chain from Aralia elata (Japanese angelica tree).